Reading from the N-terminus, the 1164-residue chain is FH1/FH2 domain-containing protein 1 (1164 aa).

The GBD/FH3 domain maps to 53-458; that stretch reads AQIPAVHRLL…AAETEKQVAL (406 aa). 2 disordered regions span residues 340–411 and 470–500; these read DIEE…VGPP and MPNEAGGHPDARQLWDSPETAPAARTPQSPA. A compositionally biased stretch (basic and acidic residues) spans 355 to 368; the sequence is KPSSEEGKRSRRSL. The residue at position 367 (serine 367) is a Phosphoserine. The span at 402-411 shows a compositional bias: low complexity; it reads GPASSPVGPP. A Phosphoserine modification is found at serine 486. Positions 487-615 constitute an FH1 domain; the sequence is PETAPAARTP…LAAPLPHSVP (129 aa). Threonine 495 bears the Phosphothreonine mark. Serine 498, serine 523, and serine 573 each carry phosphoserine. The tract at residues 566–619 is disordered; it reads GKDIPAPSPPLPLLSGVPPPPPLPPPPPIKGPFPPPPPLPLAAPLPHSVPDSSA. The segment covering 571 to 608 has biased composition (pro residues); it reads APSPPLPLLSGVPPPPPLPPPPPIKGPFPPPPPLPLAA. The interval 612-807 is interaction with ROCK1; sequence HSVPDSSALP…AEPLFDLKVG (196 aa). Residues 616–1013 enclose the FH2 domain; it reads DSSALPTKRK…YRERNKTRGR (398 aa). Phosphothreonine is present on threonine 690. The stretch at 884-921 forms a coiled coil; the sequence is LTRCAKVDFEQLTENLGQLERRSRAAEESLRSLAKHEL. A disordered region spans residues 1020-1143; it reads KFSGVAGEAP…NRKSLRRTLK (124 aa). The segment covering 1028–1041 has biased composition (low complexity); the sequence is APSNPSVPVAVSSG. One can recognise a DAD domain in the interval 1053 to 1133; the sequence is MKSLLTSRPE…AARERKRSRG (81 aa). A compositionally biased stretch (polar residues) spans 1073-1089; that stretch reads MVQSSSPIMPTVGPSTA. Residues 1127–1142 show a composition bias toward basic residues; the sequence is ERKRSRGNRKSLRRTL.

This sequence belongs to the formin homology family. In terms of assembly, self-associates via the FH2 domain. Binds to F-actin via its N-terminus. Binds to the cytoplasmic domain of CD21 via its C-terminus. Interacts with ROCK1 in a Src-dependent manner. Post-translationally, phosphorylated by ROCK1. Ubiquitous. Highly expressed in spleen.

The protein localises to the cytoplasm. The protein resides in the cytoskeleton. It is found in the cell projection. Its subcellular location is the bleb. Functionally, required for the assembly of F-actin structures, such as stress fibers. Depends on the Rho-ROCK cascade for its activity. Contributes to the coordination of microtubules with actin fibers and plays a role in cell elongation. Acts synergistically with ROCK1 to promote SRC-dependent non-apoptotic plasma membrane blebbing. This chain is FH1/FH2 domain-containing protein 1 (FHOD1), found in Homo sapiens (Human).